We begin with the raw amino-acid sequence, 474 residues long: Glutathione synthetase (474 aa).

A2 bears the N-acetylalanine mark. R125 serves as a coordination point for substrate. E144 is an ATP binding site. Mg(2+)-binding residues include E144 and N146. Substrate-binding positions include 148–151 (ISAS), 214–216 (ERN), Q220, and 267–270 (RDGY). ATP contacts are provided by residues K305, 364–373 (KPQREGGGNN), Y375, and 398–401 (MEKT). E368 is a binding site for Mg(2+). S415 carries the phosphoserine modification. E425 provides a ligand contact to ATP. R450 lines the substrate pocket. ATP is bound by residues K452 and D458. A substrate-binding site is contributed by 461 to 462 (VA).

This sequence belongs to the eukaryotic GSH synthase family. Homodimer. The cofactor is Mg(2+).

The catalysed reaction is gamma-L-glutamyl-L-cysteine + glycine + ATP = glutathione + ADP + phosphate + H(+). It functions in the pathway sulfur metabolism; glutathione biosynthesis; glutathione from L-cysteine and L-glutamate: step 2/2. Catalyzes the production of glutathione from gamma-glutamylcysteine and glycine in an ATP-dependent manner. Glutathione (gamma-glutamylcysteinylglycine, GSH) is the most abundant intracellular thiol in living aerobic cells and is required for numerous processes including the protection of cells against oxidative damage, amino acid transport, the detoxification of foreign compounds, the maintenance of protein sulfhydryl groups in a reduced state and acts as a cofactor for a number of enzymes. This is Glutathione synthetase (GSS) from Macaca fascicularis (Crab-eating macaque).